The sequence spans 520 residues: MSESGHSQPGLYGIERRRRWKEPGSSGPQNLSGPGGRERDYIAPWERERRDGSEDPSTNVMQKTPIILSKPPAERSKQPPPSTAPAAPPAPAPLEKPIVLMKPREEGKGPVAGTGASTPEGTAPPPPTAPAPPKGEKEGQRPTQPVYQIQNRGMGTAAPTAMDPVVGQAKLLPPERMKHSIKLVDDQMNWCDSAIEYLLDQTDVLVVGVLGLQGTGKSMVMSLLSANTPEEDQRAYVFRAQSAEMKERGGNQTSGIDFFITQERIVFLDTQPILSPSILDHLINNDRKLPPEYNLPHTYVEMQSLQIAAFLFTVCHVVIVVQDWFTDLSLYRFLQTAEMVKPSTPSPSHESSSSAGSDEGTEYYPHLVFLQNKARREDFCPRKLRQMHLMIDQLMAHSHLRYKGTLSMLQCNVFPGLPPDFLDAEVNLFLVPFMDSEAENENPPRAGPGSSPLFSLLPGYRGHPSFQSLVSKLRSQVMSMARPQLSHTILTEKNWFHYAARIWDGVKKSSALAEYSRLLA.

A disordered region spans residues 1 to 143 (MSESGHSQPG…KGEKEGQRPT (143 aa)). An N-acetylserine modification is found at Ser-2. A phosphoserine mark is found at Ser-2, Ser-4, Ser-7, Ser-32, and Ser-53. A compositionally biased stretch (basic and acidic residues) spans 36-53 (GRERDYIAPWERERRDGS). Composition is skewed to pro residues over residues 78-94 (QPPP…PAPL) and 122-133 (TAPPPPTAPAPP). Ser-451 carries the post-translational modification Phosphoserine.

Belongs to the SMG9 family. In terms of assembly, self-associates to form homodimers and forms heterodimers with SMG8; these assembly forms may represent SMG1C intermediate forms. Component of the SMG1C complex composed of SMG1, SMG8 and SMG9. Interacts with DHX34; the interaction is RNA-independent. Post-translationally, phosphorylated by SMG1.

Functionally, involved in nonsense-mediated decay (NMD) of mRNAs containing premature stop codons. Is recruited by release factors to stalled ribosomes together with SMG1 and SMG8 (forming the SMG1C protein kinase complex) and, in the SMG1C complex, is required for the efficient association between SMG1 and SMG8. Plays a role in brain, heart, and eye development. This is Nonsense-mediated mRNA decay factor SMG9 from Mus musculus (Mouse).